The primary structure comprises 341 residues: Anthranilate phosphoribosyltransferase (341 aa).

5-phospho-alpha-D-ribose 1-diphosphate is bound by residues Gly-81, 84 to 85 (GD), Thr-89, 91 to 94 (NIST), 109 to 117 (KHGSRSVSG), and Ser-121. Gly-81 is an anthranilate binding site. Ser-93 contacts Mg(2+). Arg-167 contacts anthranilate. Asp-226 and Glu-227 together coordinate Mg(2+).

Belongs to the anthranilate phosphoribosyltransferase family. In terms of assembly, homodimer. Mg(2+) serves as cofactor.

The catalysed reaction is N-(5-phospho-beta-D-ribosyl)anthranilate + diphosphate = 5-phospho-alpha-D-ribose 1-diphosphate + anthranilate. It functions in the pathway amino-acid biosynthesis; L-tryptophan biosynthesis; L-tryptophan from chorismate: step 2/5. Functionally, catalyzes the transfer of the phosphoribosyl group of 5-phosphorylribose-1-pyrophosphate (PRPP) to anthranilate to yield N-(5'-phosphoribosyl)-anthranilate (PRA). This Methylococcus capsulatus (strain ATCC 33009 / NCIMB 11132 / Bath) protein is Anthranilate phosphoribosyltransferase.